Consider the following 602-residue polypeptide: Elongation factor 4 (602 aa).

One can recognise a tr-type G domain in the interval serine 7–alanine 189. GTP is bound by residues aspartate 19–threonine 24 and asparagine 136–aspartate 139.

This sequence belongs to the TRAFAC class translation factor GTPase superfamily. Classic translation factor GTPase family. LepA subfamily.

The protein resides in the cell inner membrane. It catalyses the reaction GTP + H2O = GDP + phosphate + H(+). Functionally, required for accurate and efficient protein synthesis under certain stress conditions. May act as a fidelity factor of the translation reaction, by catalyzing a one-codon backward translocation of tRNAs on improperly translocated ribosomes. Back-translocation proceeds from a post-translocation (POST) complex to a pre-translocation (PRE) complex, thus giving elongation factor G a second chance to translocate the tRNAs correctly. Binds to ribosomes in a GTP-dependent manner. This chain is Elongation factor 4, found in Gloeobacter violaceus (strain ATCC 29082 / PCC 7421).